Consider the following 209-residue polypeptide: Dual specificity phosphatase 29 (209 aa).

The 149-residue stretch at 45–193 (HVNEVWPNLY…LRELDIKLAL (149 aa)) folds into the Tyrosine-protein phosphatase domain. 137–144 (NCAMGRSR) is a binding site for substrate. Cys138 acts as the Phosphocysteine intermediate in catalysis.

The protein belongs to the protein-tyrosine phosphatase family. Non-receptor class dual specificity subfamily.

The protein resides in the cytoplasm. The protein localises to the nucleus. It carries out the reaction O-phospho-L-tyrosyl-[protein] + H2O = L-tyrosyl-[protein] + phosphate. The enzyme catalyses O-phospho-L-seryl-[protein] + H2O = L-seryl-[protein] + phosphate. The catalysed reaction is O-phospho-L-threonyl-[protein] + H2O = L-threonyl-[protein] + phosphate. Its function is as follows. Dual specificity phosphatase able to dephosphorylate phosphotyrosine, phosphoserine and phosphothreonine residues, with a preference for phosphotyrosine as a substrate. Functionally, dual specificity phosphatase able to dephosphorylate phosphotyrosine, phosphoserine and phosphothreonine residues within the same substrate, with a preference for phosphotyrosine as a substrate. Involved in the modulation of AMPK and MAPK1/2 signaling pathway. In Xenopus laevis (African clawed frog), this protein is Dual specificity phosphatase 29 (dusp29).